A 169-amino-acid polypeptide reads, in one-letter code: Actin-related protein 2/3 complex subunit 4 (169 aa).

It belongs to the ARPC4 family. Component of the Arp2/3 complex composed of arpB/Arp2, arpC/Arp3, arcA/p41-arc, arcB/p34-arc, arcC/p21-arc, arcD/p20-arc and arcE/p16-arc. Interacts with carmil (via the region between the LRR domain and COOH-terminal proline-rich domain); carmil is required for Arp2/3-dependent actin nucleation. Arp2/3 complex, MyoB, MyoC, and the alpha and beta subunits of capping protein all form a larger complex with carmil.

Its subcellular location is the cytoplasm. It is found in the cytoskeleton. The protein localises to the cytosol. It localises to the cell cortex. The protein resides in the cell projection. Its subcellular location is the pseudopodium. Its function is as follows. Functions as a component of the Arp2/3 complex which is involved in regulation of actin polymerization and together with an activating nucleation-promoting factor (NPF) mediates the formation of branched actin networks. Seems to contact the pointed end of the daughter actin filament. The Arp2/3 complex is involved in organizing the actin system in cell motility and chemotaxis, in phagocytosis and macropinocytosis, at late steps of endosome processing, and in mitosis. In concert with a group of other proteins, the Arp2/3 complex plays a general role in the rapid activation and adaptation of the actin system to its multiple functions. The sequence is that of Actin-related protein 2/3 complex subunit 4 (arcD) from Dictyostelium discoideum (Social amoeba).